We begin with the raw amino-acid sequence, 281 residues long: Ribosomal protein L11 methyltransferase (281 aa).

4 residues coordinate S-adenosyl-L-methionine: Thr-133, Gly-154, Asp-175, and Asn-216.

It belongs to the methyltransferase superfamily. PrmA family.

The protein localises to the cytoplasm. The enzyme catalyses L-lysyl-[protein] + 3 S-adenosyl-L-methionine = N(6),N(6),N(6)-trimethyl-L-lysyl-[protein] + 3 S-adenosyl-L-homocysteine + 3 H(+). Methylates ribosomal protein L11. In Campylobacter jejuni subsp. jejuni serotype O:2 (strain ATCC 700819 / NCTC 11168), this protein is Ribosomal protein L11 methyltransferase.